A 477-amino-acid polypeptide reads, in one-letter code: MSWEVVIGLETHVQLNTRSKIFSGSSTAFGAEPNTQANVVDVALPGVLPVLNKEAVQCAIRFGLAVNAEIAPRSVFARKNYFYPDLPKGYQISQYELPVVGKGALTIQVGDTEKTIRITRAHLEEDAGKSMHGASPGQSGIDLNRAGTPLLEIVTEPDMRSAAEAVAYARKLHELVQWINICDGNMQEGSFRCDVNVSVRRKGQEKLGTRREIKNLNSFRFMQQAIEFETRWQIETLEDGGKIEQATVLFNPDTGETRAMRTKEEANDYRYFPDPDLLPLAISTEDIDAVRVTLPELPSAMKARFERDYGLSAYDASALTASRSVADYFTATLAEFGGEAKLVANWVMGGISAKLNEEGREITDAPVSPVLLAGLLKRIADNTISSKIAKDVFEAMWAGEGDADAIIERKGLKQVTDSGAIEAIVDEVLAANAAMVEEFRAGKEKAFNALVGQTMKASKGKANPAQVNEILKRKLAG.

The protein belongs to the GatB/GatE family. GatB subfamily. As to quaternary structure, heterotrimer of A, B and C subunits.

It carries out the reaction L-glutamyl-tRNA(Gln) + L-glutamine + ATP + H2O = L-glutaminyl-tRNA(Gln) + L-glutamate + ADP + phosphate + H(+). The catalysed reaction is L-aspartyl-tRNA(Asn) + L-glutamine + ATP + H2O = L-asparaginyl-tRNA(Asn) + L-glutamate + ADP + phosphate + 2 H(+). Its function is as follows. Allows the formation of correctly charged Asn-tRNA(Asn) or Gln-tRNA(Gln) through the transamidation of misacylated Asp-tRNA(Asn) or Glu-tRNA(Gln) in organisms which lack either or both of asparaginyl-tRNA or glutaminyl-tRNA synthetases. The reaction takes place in the presence of glutamine and ATP through an activated phospho-Asp-tRNA(Asn) or phospho-Glu-tRNA(Gln). In Methylobacillus flagellatus (strain ATCC 51484 / DSM 6875 / VKM B-1610 / KT), this protein is Aspartyl/glutamyl-tRNA(Asn/Gln) amidotransferase subunit B.